We begin with the raw amino-acid sequence, 100 residues long: Urease subunit gamma (100 aa).

It belongs to the urease gamma subunit family. As to quaternary structure, heterotrimer of UreA (gamma), UreB (beta) and UreC (alpha) subunits. Three heterotrimers associate to form the active enzyme.

It localises to the cytoplasm. The catalysed reaction is urea + 2 H2O + H(+) = hydrogencarbonate + 2 NH4(+). The protein operates within nitrogen metabolism; urea degradation; CO(2) and NH(3) from urea (urease route): step 1/1. The chain is Urease subunit gamma from Verminephrobacter eiseniae (strain EF01-2).